Here is a 111-residue protein sequence, read N- to C-terminus: Large ribosomal subunit protein bL21 (111 aa).

This sequence belongs to the bacterial ribosomal protein bL21 family. In terms of assembly, part of the 50S ribosomal subunit. Contacts protein L20.

Its function is as follows. This protein binds to 23S rRNA in the presence of protein L20. The protein is Large ribosomal subunit protein bL21 of Thermosynechococcus vestitus (strain NIES-2133 / IAM M-273 / BP-1).